The chain runs to 285 residues: 2-oxoglutarate synthase subunit KorB (285 aa).

Heterotetramer of the KorA, KorB, KorC and KorD subunits.

The catalysed reaction is 2 oxidized [2Fe-2S]-[ferredoxin] + 2-oxoglutarate + CoA = succinyl-CoA + 2 reduced [2Fe-2S]-[ferredoxin] + CO2 + H(+). The polypeptide is 2-oxoglutarate synthase subunit KorB (korB) (Methanothermobacter marburgensis (strain ATCC BAA-927 / DSM 2133 / JCM 14651 / NBRC 100331 / OCM 82 / Marburg) (Methanobacterium thermoautotrophicum)).